The chain runs to 362 residues: Peptide chain release factor 1 (362 aa).

Glutamine 240 carries the post-translational modification N5-methylglutamine.

It belongs to the prokaryotic/mitochondrial release factor family. In terms of processing, methylated by PrmC. Methylation increases the termination efficiency of RF1.

It is found in the cytoplasm. Its function is as follows. Peptide chain release factor 1 directs the termination of translation in response to the peptide chain termination codons UAG and UAA. This Bifidobacterium longum (strain DJO10A) protein is Peptide chain release factor 1.